A 258-amino-acid chain; its full sequence is MSTESYEDAIKRLGELLSKKSDLGNVAAAKIKKLTDELEELDSNKLDAVERIKSGFLHFKTNNYEKNPTLYNSLAKSQTPKFLVFACADSRVSPSHILNFQLGEAFIVRNIANMVPPYDKTKHSNVGAALEYPITVLNVENILVIGHSCCGGIKGLMAIEDNTAPTKTEFIENWIQICAPAKNRIKQDCKDLSFEDQCTNCEKEAVNVSLGNLLSYPFVRERVVKNKLAIRGAHYDFVKGTFDLWELDFKTTPAFALS.

An N-terminal signal peptide occupies residues 1 to 28; that stretch reads MSTESYEDAIKRLGELLSKKSDLGNVAA. Residues 24-54 are a coiled coil; that stretch reads GNVAAAKIKKLTDELEELDSNKLDAVERIKS. Thr-35 is subject to Phosphothreonine. Position 95 is a phosphoserine (Ser-95). The residue at position 201 (Cys-201) is an S-nitrosocysteine.

Belongs to the beta-class carbonic anhydrase family. Strongly expressed in aerial tissues including leaves, stems, flowers and siliques, and, to a lower extent, in roots.

The protein resides in the cytoplasm. The protein localises to the cytosol. It catalyses the reaction hydrogencarbonate + H(+) = CO2 + H2O. In terms of biological role, reversible hydration of carbon dioxide. The chain is Beta carbonic anhydrase 3 (BCA3) from Arabidopsis thaliana (Mouse-ear cress).